Here is a 119-residue protein sequence, read N- to C-terminus: V-type proton ATPase subunit F (119 aa).

The protein belongs to the V-ATPase F subunit family. V-ATPase is a heteromultimeric enzyme made up of two complexes: the ATP-hydrolytic V1 complex and the proton translocation V0 complex. The V1 complex consists of three catalytic AB heterodimers that form a heterohexamer, three peripheral stalks each consisting of EG heterodimers, one central rotor including subunits D and F, and the regulatory subunits C and H. The proton translocation complex V0 consists of the proton transport subunit a, a ring of proteolipid subunits c9c'', rotary subunit d, subunits e and f, and the accessory subunits ATP6AP1/Ac45 and ATP6AP2/PRR.

Its subcellular location is the cytoplasmic vesicle. It is found in the secretory vesicle. The protein localises to the synaptic vesicle membrane. It localises to the clathrin-coated vesicle membrane. Its function is as follows. Subunit of the V1 complex of vacuolar(H+)-ATPase (V-ATPase), a multisubunit enzyme composed of a peripheral complex (V1) that hydrolyzes ATP and a membrane integral complex (V0) that translocates protons. V-ATPase is responsible for acidifying and maintaining the pH of intracellular compartments and in some cell types, is targeted to the plasma membrane, where it is responsible for acidifying the extracellular environment. The protein is V-type proton ATPase subunit F (ATP6V1F) of Homo sapiens (Human).